Consider the following 452-residue polypeptide: Maltoporin (452 aa).

An N-terminal signal peptide occupies residues 1–25; that stretch reads MMITLRKLPLAVAVAAGVMSAQAMA.

It belongs to the porin LamB (TC 1.B.3) family. In terms of assembly, homotrimer formed of three 18-stranded antiparallel beta-barrels, containing three independent channels.

It localises to the cell outer membrane. The catalysed reaction is beta-maltose(in) = beta-maltose(out). Functionally, involved in the transport of maltose and maltodextrins. The protein is Maltoporin of Salmonella newport (strain SL254).